The sequence spans 350 residues: Protein RecA (350 aa).

ATP is bound at residue 65-72 (GPESSGKT).

Belongs to the RecA family.

It is found in the cytoplasm. Its function is as follows. Can catalyze the hydrolysis of ATP in the presence of single-stranded DNA, the ATP-dependent uptake of single-stranded DNA by duplex DNA, and the ATP-dependent hybridization of homologous single-stranded DNAs. It interacts with LexA causing its activation and leading to its autocatalytic cleavage. The polypeptide is Protein RecA (Nautilia profundicola (strain ATCC BAA-1463 / DSM 18972 / AmH)).